Consider the following 165-residue polypeptide: Large ribosomal subunit protein uL10 (165 aa).

The protein belongs to the universal ribosomal protein uL10 family. Part of the ribosomal stalk of the 50S ribosomal subunit. The N-terminus interacts with L11 and the large rRNA to form the base of the stalk. The C-terminus forms an elongated spine to which L12 dimers bind in a sequential fashion forming a multimeric L10(L12)X complex.

Functionally, forms part of the ribosomal stalk, playing a central role in the interaction of the ribosome with GTP-bound translation factors. The chain is Large ribosomal subunit protein uL10 from Burkholderia mallei (strain NCTC 10229).